The following is a 144-amino-acid chain: Large ribosomal subunit protein uL13 (144 aa).

It belongs to the universal ribosomal protein uL13 family. In terms of assembly, part of the 50S ribosomal subunit.

Its function is as follows. This protein is one of the early assembly proteins of the 50S ribosomal subunit, although it is not seen to bind rRNA by itself. It is important during the early stages of 50S assembly. The protein is Large ribosomal subunit protein uL13 of Lachnoclostridium phytofermentans (strain ATCC 700394 / DSM 18823 / ISDg) (Clostridium phytofermentans).